Reading from the N-terminus, the 150-residue chain is MEFINQTFFSDYSEGKIDTIPYALGIVLALTNGSRILKFINLLISLLRKFIITSKTVIGKFKIENNTSHQNDDIHKEYEEVMKQMREMRVHVTALFDSIHKDNMEWRMSESIRREKKREMKASTAENEVKIHTNDVNICDTSGLETEVCL.

Residues 1-15 are Lumenal-facing; sequence MEFINQTFFSDYSEG. N5 carries an N-linked (GlcNAc...) asparagine; by host glycan. A helical; Signal-anchor for type III membrane protein transmembrane segment spans residues 16–30; that stretch reads KIDTIPYALGIVLAL. Residues 31-150 are Cytoplasmic-facing; it reads TNGSRILKFI…TSGLETEVCL (120 aa).

The protein belongs to the rotavirus NSP4 family. In terms of assembly, homotetramer. Interacts with the immature particle in the viroplasm. Interacts with host CAV1, early and late in infection. Interacts with host integrin ITGA1/ITGB1 heterodimer. Interacts with host integrin ITGA2/ITGB1 heterodimer. Interaction with microtubules blocks trafficking to the Golgi apparatus. In terms of processing, the N-glycosyl content is primarily Man(9)GlcNAc, with a small amount of Man(8)GlcNAc.

It is found in the host rough endoplasmic reticulum membrane. It localises to the host membrane. Its subcellular location is the host caveola. The protein resides in the secreted. Plays an essential role in the virus replication cycle by acting as a viroporin. Creates a pore in the host endoplasmic reticulum and as a consequence releases Ca(2+) in the cytoplasm of infected cell. In turn, high levels of cytoplasmic calcium trigger membrane trafficking and transport of viral ER-associated proteins to viroplasms, sites of viral genome replication and immature particle assembly. Functionally, the secreted form acts as an enterotoxin that causes phospholipase C-dependent elevation of the intracellular calcium concentration in host intestinal mucosa cells. Increased concentration of intracellular calcium disrupts the cytoskeleton and the tight junctions, raising the paracellular permeability. Potentiates chloride ion secretion through a calcium ion-dependent signaling pathway, inducing age-dependent diarrhea. To perform this enterotoxigenic role in vivo, NSP4 is released from infected enterocytes in a soluble form capable of diffusing within the intestinal lumen and interacting with host plasma membrane receptors on neighboring epithelial cells such as integrins ITGA1/ITGB1 and ITGA2/ITGB1. The protein is Non-structural glycoprotein 4 of Sus scrofa (Pig).